Reading from the N-terminus, the 360-residue chain is Phospho-N-acetylmuramoyl-pentapeptide-transferase (360 aa).

Transmembrane regions (helical) follow at residues 21 to 41 (YLTL…ILIG), 73 to 93 (TMGG…WADL), 97 to 117 (YVLV…VDDY), 134 to 154 (YFWQ…SATM), 168 to 188 (VFPQ…VGTS), 199 to 219 (GLAI…AYVT), 239 to 259 (LVIV…FNTY), 263 to 283 (VFMG…LAVL), 288 to 308 (LVLI…ILQV), and 338 to 358 (VIVR…ATLK).

The protein belongs to the glycosyltransferase 4 family. MraY subfamily. Mg(2+) is required as a cofactor.

The protein resides in the cell inner membrane. It catalyses the reaction UDP-N-acetyl-alpha-D-muramoyl-L-alanyl-gamma-D-glutamyl-meso-2,6-diaminopimeloyl-D-alanyl-D-alanine + di-trans,octa-cis-undecaprenyl phosphate = di-trans,octa-cis-undecaprenyl diphospho-N-acetyl-alpha-D-muramoyl-L-alanyl-D-glutamyl-meso-2,6-diaminopimeloyl-D-alanyl-D-alanine + UMP. It functions in the pathway cell wall biogenesis; peptidoglycan biosynthesis. Catalyzes the initial step of the lipid cycle reactions in the biosynthesis of the cell wall peptidoglycan: transfers peptidoglycan precursor phospho-MurNAc-pentapeptide from UDP-MurNAc-pentapeptide onto the lipid carrier undecaprenyl phosphate, yielding undecaprenyl-pyrophosphoryl-MurNAc-pentapeptide, known as lipid I. This Alteromonas mediterranea (strain DSM 17117 / CIP 110805 / LMG 28347 / Deep ecotype) protein is Phospho-N-acetylmuramoyl-pentapeptide-transferase.